A 188-amino-acid chain; its full sequence is Threonylcarbamoyl-AMP synthase (188 aa).

Positions 3–188 (QLHPSDIKDV…RSGKILRNGQ (186 aa)) constitute a YrdC-like domain.

Belongs to the SUA5 family. TsaC subfamily.

It is found in the cytoplasm. The catalysed reaction is L-threonine + hydrogencarbonate + ATP = L-threonylcarbamoyladenylate + diphosphate + H2O. Required for the formation of a threonylcarbamoyl group on adenosine at position 37 (t(6)A37) in tRNAs that read codons beginning with adenine. Catalyzes the conversion of L-threonine, HCO(3)(-)/CO(2) and ATP to give threonylcarbamoyl-AMP (TC-AMP) as the acyladenylate intermediate, with the release of diphosphate. This is Threonylcarbamoyl-AMP synthase from Shewanella oneidensis (strain ATCC 700550 / JCM 31522 / CIP 106686 / LMG 19005 / NCIMB 14063 / MR-1).